Reading from the N-terminus, the 40-residue chain is Large ribosomal subunit protein bL36B (40 aa).

The protein belongs to the bacterial ribosomal protein bL36 family.

This chain is Large ribosomal subunit protein bL36B, found in Arthrobacter sp. (strain FB24).